The chain runs to 20 residues: Cytochrome P450-RR1 (20 aa).

Belongs to the cytochrome P450 family. It depends on heme as a cofactor.

In terms of biological role, P450-RRI catalyzes the O-dealkylation of 2-ethoxyphenol and 2-methoxyphenol to produce catechol. The cytochrome binds other ortho-substituted phenols, including 2-ethoxyphenol, 2-methylphenol and 2-chlorophenol. This chain is Cytochrome P450-RR1, found in Rhodococcus rhodochrous.